The primary structure comprises 295 residues: Deleted in azoospermia-like (295 aa).

The span at 1 to 10 (MSTANPETPN) shows a compositional bias: polar residues. Residues 1 to 25 (MSTANPETPNSTISREASTQSSSAA) are disordered. A compositionally biased stretch (low complexity) spans 11 to 25 (STISREASTQSSSAA). The region spanning 40 to 115 (NTVFVGGIDV…KKLKLGPAIR (76 aa)) is the RRM domain. Residues 80 to 132 (KGYGFVSFFNDVDVQKIVESQINFHGKKLKLGPAIRKQNLCAYHVQPRPLVFN) are homodimerization. Residues 167-190 (AYPTYPNSPVQVITGYQLPVYNYQ) enclose the DAZ domain. Tyrosine 276 carries the post-translational modification Phosphotyrosine.

It belongs to the RRM DAZ family. As to quaternary structure, homodimer and heterodimer. Multiple DAZL RRMs can bind to a single RNA containing multiple GUU triplets. Forms a heterodimer with DAZ. Interacts with BOLL, DAZAP1 and DAZAP2. Interacts with PUM2. Testis specific.

It is found in the cytoplasm. It localises to the nucleus. Functionally, RNA-binding protein, which is essential for gametogenesis in both males and females. Plays a central role during spermatogenesis. Acts by binding to the 3'-UTR of mRNA, specifically recognizing GUU triplets, and thereby regulating the translation of key transcripts. The polypeptide is Deleted in azoospermia-like (DAZL) (Homo sapiens (Human)).